Consider the following 425-residue polypeptide: UPF0761 membrane protein XC_3370 (425 aa).

6 helical membrane passes run 48-68, 105-125, 154-174, 182-202, 216-236, and 250-270; these read VFAL…FPAF, FTVA…HSIE, GTML…LPLF, LAEF…IVLI, ALPG…GFGF, and ALSA…SVLL.

This sequence belongs to the UPF0761 family.

It is found in the cell inner membrane. The polypeptide is UPF0761 membrane protein XC_3370 (Xanthomonas campestris pv. campestris (strain 8004)).